The primary structure comprises 96 residues: Putative translation initiation factor IF-1, chloroplastic (96 aa).

One can recognise an S1-like domain in the interval 18–57 (INYVSGKIRHSFIRILPGDRVKIEVSPYDSTKGRIIYRLH).

It belongs to the IF-1 family. As to quaternary structure, component of the 30S ribosomal translation pre-initiation complex which assembles on the 30S ribosome in the order IF-2 and IF-3, IF-1 and N-formylmethionyl-tRNA(fMet); mRNA recruitment can occur at any time during PIC assembly.

The protein resides in the plastid. It is found in the chloroplast. Its function is as follows. One of the essential components for the initiation of protein synthesis. Stabilizes the binding of IF-2 and IF-3 on the 30S subunit to which N-formylmethionyl-tRNA(fMet) subsequently binds. Helps modulate mRNA selection, yielding the 30S pre-initiation complex (PIC). Upon addition of the 50S ribosomal subunit IF-1, IF-2 and IF-3 are released leaving the mature 70S translation initiation complex. The protein is Putative translation initiation factor IF-1, chloroplastic (infA) of Nicotiana tabacum (Common tobacco).